Here is a 417-residue protein sequence, read N- to C-terminus: MAP kinase-interacting serine/threonine-protein kinase 1 (417 aa).

Residues 1–20 are disordered; it reads MVSSQPVPIDDGGKRRKKKR. Residues 37–321 form the Protein kinase domain; the sequence is RLTDELLGEG…AAQVLQHPWL (285 aa). ATP is bound by residues 43–51 and K66; that span reads LGEGAYAKV. The active-site Proton acceptor is D158. Positions 397 to 417 are disordered; it reads AHARKGGSHLTHTTVTSQGAT. Residues 406–417 are compositionally biased toward polar residues; that stretch reads LTHTTVTSQGAT.

Belongs to the protein kinase superfamily. CAMK Ser/Thr protein kinase family. The cofactor is Mg(2+).

The enzyme catalyses L-seryl-[protein] + ATP = O-phospho-L-seryl-[protein] + ADP + H(+). It catalyses the reaction L-threonyl-[protein] + ATP = O-phospho-L-threonyl-[protein] + ADP + H(+). May play a role in the response to environmental stress and cytokines. Appears to regulate translation by phosphorylating EIF4E, thus increasing the affinity of this protein for the 7-methylguanosine-containing mRNA cap. This is MAP kinase-interacting serine/threonine-protein kinase 1 (mknk1) from Xenopus tropicalis (Western clawed frog).